Reading from the N-terminus, the 420-residue chain is PHO85 cyclin-6 (420 aa).

3 disordered regions span residues 1-82, 134-155, and 268-321; these read MSIK…ESSF, QGTH…DTSN, and VTTT…GVQR. Over residues 7-22 the composition is skewed to low complexity; it reads SPSSTNASSSPKSTYS. S61 carries the phosphoserine modification. The segment covering 134 to 143 has biased composition (polar residues); sequence QGTHTVQSST. Basic and acidic residues predominate over residues 277–296; that stretch reads AKHESPSNESSLDKANRGAD. S281 and S312 each carry phosphoserine. Residues 307-316 show a composition bias toward acidic residues; that stretch reads NENDDSDDEN. T317 is modified (phosphothreonine).

The protein belongs to the cyclin family. PHO80 subfamily. As to quaternary structure, forms a cyclin-CDK complex with PHO85. Interacts with the substrate protein YJL084C. Interacts with elongin-C, which stabilizes PCL6. Interacts with the CDK inhibitor (CKI) PHO81.

The protein resides in the cytoplasm. It localises to the nucleus. In terms of biological role, cyclin partner of the cyclin-dependent kinase (CDK) PHO85. Together with cyclin PCL7, controls glycogen phosphorylase and glycogen synthase activities in response to nutrient availablility. The PCL6-PHO85 cyclin-CDK holoenzyme has GLC8 kinase activity and phosphorylates and inactivates the phosphatase PP1-2 inhibitor GLC8, causing activation of PP1-2, which then dephosphorylates and activates glycogen phosphorylase. PCL6-PHO85 also phosphorylates YJL084C. This is PHO85 cyclin-6 (PCL6) from Saccharomyces cerevisiae (strain ATCC 204508 / S288c) (Baker's yeast).